We begin with the raw amino-acid sequence, 259 residues long: UPF0246 protein Aave_1172 (259 aa).

The protein belongs to the UPF0246 family.

In Paracidovorax citrulli (strain AAC00-1) (Acidovorax citrulli), this protein is UPF0246 protein Aave_1172.